A 358-amino-acid polypeptide reads, in one-letter code: cAMP-dependent protein kinase catalytic subunit PRKX (358 aa).

M1 carries the N-acetylmethionine modification. The interval M1–P34 is disordered. A Protein kinase domain is found at F49–F303. ATP contacts are provided by residues V55 to V63 and K78. D172 acts as the Proton acceptor in catalysis. T203 bears the Phosphothreonine mark. Residues R304–F358 enclose the AGC-kinase C-terminal domain.

This sequence belongs to the protein kinase superfamily. AGC Ser/Thr protein kinase family. cAMP subfamily. As to quaternary structure, like other cAMP-dependent protein kinases, the inactive holoenzyme is probably composed of 2 PRKX catalytic subunits and a dimer of regulatory subunits. Interacts (cAMP-dependent) specifically with the regulatory subunits PRKAR1A and PRKAR1B. Compared to other cAMP-dependent serine/threonine protein kinases, does not interact with the 2 other PKA regulatory subunits PRKAR2A and PRKAR2B. Interacts with cAMP-dependent protein kinase inhibitor/PKI proteins; inhibits PRKX. Interacts with GPKOW. Interacts with SMAD6. Interacts with PKD1; involved in differentiation and controlled morphogenesis of the kidney. Interacts with PIN1 (via WW domain). In terms of processing, phosphorylated; autophosphorylates in vitro. In terms of tissue distribution, widely expressed (at protein level). Specifically expressed in blood by macrophages and granulocytes according to PubMed:9860982.

Its subcellular location is the cytoplasm. It localises to the nucleus. It carries out the reaction L-seryl-[protein] + ATP = O-phospho-L-seryl-[protein] + ADP + H(+). It catalyses the reaction L-threonyl-[protein] + ATP = O-phospho-L-threonyl-[protein] + ADP + H(+). With respect to regulation, binding of cAMP to the PRKAR1A or PRKAR1B regulatory subunits induces dissociation of the holoenzyme heterotetramer. The released monomeric PRKX is then active and able to phosphorylate its substrates. Its function is as follows. Serine/threonine protein kinase regulated by and mediating cAMP signaling in cells. Acts through phosphorylation of downstream targets that may include CREB, SMAD6 and PKD1 and has multiple functions in cellular differentiation and epithelial morphogenesis. Regulates myeloid cell differentiation through SMAD6 phosphorylation. Involved in nephrogenesis by stimulating renal epithelial cell migration and tubulogenesis. Also involved in angiogenesis through stimulation of endothelial cell proliferation, migration and vascular-like structure formation. In Homo sapiens (Human), this protein is cAMP-dependent protein kinase catalytic subunit PRKX (PRKX).